A 210-amino-acid polypeptide reads, in one-letter code: MRKTKTEALKTKEHLMLAALETFYRKGIARTSLNEIAQAAGVTRGALYWHFKNKEDLFDALFQRICDDIENCIAQDAADAEGGSWTVFRHTLLHFFERLQSNDIHYKFHNILFLKCEHTEQNAAVIAIARKHQAIWREKITAVLTEAVENQDLADDLDKETAVIFIKSTLDGLIWRWFSSGESFDLGKTAPRIIGIMMDNLENHPCLRRK.

The 61-residue stretch at 9–69 folds into the HTH tetR-type domain; it reads LKTKEHLMLA…ALFQRICDDI (61 aa). A DNA-binding region (H-T-H motif) is located at residues 32 to 51; sequence SLNEIAQAAGVTRGALYWHF.

As to quaternary structure, homodimer. Binds to DNA as a pair of dimers.

Its activity is regulated as follows. DNA binding is affected significantly by increasing the NaCl concentration. In terms of biological role, controls the permeability of the cell envelope to hydrophobic compounds such as antibiotics and detergents. Represses transcription of the mtrCDE-encoded efflux pump by binding within the mtrCDE promoter. Also negatively regulates the expression of farR, by binding to its promoter region, leading indirectly to the positive regulation of expression of the farAB-encoded efflux pump. In Neisseria gonorrhoeae, this protein is HTH-type transcriptional regulator MtrR.